A 170-amino-acid polypeptide reads, in one-letter code: Cathelicidin antimicrobial peptide (170 aa).

The N-terminal stretch at M1–A30 is a signal peptide. The propeptide at Q31–R131 is cathelin-like domain (CLD). Cystine bridges form between C86–C97 and C108–C125. The active core stretch occupies residues L150–G162.

Belongs to the cathelicidin family. As to quaternary structure, monomer, homodimer or homotrimer (in vitro). Oligomerizes as tetra- or hexamer in solution (in vitro). Proteolytically cleaved by proteinase PRTN3 into antibacterial peptide LL-37. Proteolytically cleaved by cathepsin CTSG and neutrophil elastase ELANE. In terms of processing, resistant to proteolytic degradation in solution, and when bound to both zwitterionic (mimicking mammalian membranes) and negatively charged membranes (mimicking bacterial membranes). Post-translationally, after secretion onto the skin surface, the CAMP gene product is processed by a serine protease-dependent mechanism into multiple novel antimicrobial peptides distinct from and shorter than cathelicidin LL-37. These peptides show enhanced antimicrobial action, acquiring the ability to kill skin pathogens such as S.aureus, E.coli and C.albicans. These peptides have lost the ability to stimulate CXCL8/IL8 release from keratinocytes. The peptides act synergistically, killing bacteria at lower concentrations when present together, and maintain activity at increased salt condition.

The protein resides in the secreted. Its subcellular location is the vesicle. Antimicrobial protein that is an integral component of the innate immune system. Binds to bacterial lipopolysaccharides (LPS). Acts via neutrophil N-formyl peptide receptors to enhance the release of CXCL2. Postsecretory processing generates multiple cathelicidin antimicrobial peptides with various lengths which act as a topical antimicrobial defense in sweat on skin. The unprocessed precursor form, cathelicidin antimicrobial peptide, inhibits the growth of Gram-negative E.coli and E.aerogenes with efficiencies comparable to that of the mature peptide LL-37 (in vitro). In terms of biological role, antimicrobial peptide that is an integral component of the innate immune system. Binds to bacterial lipopolysaccharides (LPS). Causes membrane permeabilization by forming transmembrane pores (in vitro). Causes lysis of E.coli. Exhibits antimicrobial activity against Gram-negative bacteria such as P.aeruginosa, S.typhimurium, E.aerogenes, E.coli and P.syringae, Gram-positive bacteria such as L.monocytogenes, S.epidermidis, S.pyogenes and S.aureus, as well as vancomycin-resistant enterococci (in vitro). Exhibits antimicrobial activity against methicillin-resistant S.aureus, P.mirabilis, and C.albicans in low-salt media, but not in media containing 100 mM NaCl (in vitro). Forms chiral supramolecular assemblies with quinolone signal (PQS) molecules of P.aeruginosa, which may lead to interference of bacterial quorum signaling and perturbance of bacterial biofilm formation. May form supramolecular fiber-like assemblies on bacterial membranes. Induces cytokine and chemokine producation as well as TNF/TNFA and CSF2/GMCSF production in normal human keratinocytes. Exhibits hemolytic activity against red blood cells. Functionally, exhibits antimicrobial activity against E.coli and B.megaterium (in vitro). The chain is Cathelicidin antimicrobial peptide from Trachypithecus obscurus (Dusky leaf-monkey).